The sequence spans 496 residues: Angiopoietin-2 (496 aa).

Residues 1–18 form the signal peptide; that stretch reads MWQIVFLTFGCDLVLASA. 6 N-linked (GlcNAc...) asparagine glycosylation sites follow: Asn-89, Asn-119, Asn-133, Asn-151, Asn-240, and Asn-304. Positions 159 to 256 form a coiled coil; that stretch reads QLLQHSISTN…QQHDLMETVN (98 aa). The Fibrinogen C-terminal domain maps to 280 to 496; sequence TFRDCAEIFK…TTMMIRPADF (217 aa). A disulfide bridge links Cys-284 with Cys-313. Residues Asp-429, Asp-431, Cys-433, and Cys-435 each coordinate Ca(2+). Disulfide bonds link Cys-433/Cys-435 and Cys-437/Cys-450.

As to quaternary structure, interacts with TEK/TIE2, competing for the same binding site as ANGPT1. Interacts with ITGA5. Interacts with SVEP1/polydom. Interacts with THBD; this interaction significantly inhibits the generation of activated PC and TAFIa/CPB2 by the thrombin/thrombomodulin complex.

It localises to the secreted. Binds to TEK/TIE2, competing for the ANGPT1 binding site, and modulating ANGPT1 signaling. Can induce tyrosine phosphorylation of TEK/TIE2 in the absence of ANGPT1. In the absence of angiogenic inducers, such as VEGF, ANGPT2-mediated loosening of cell-matrix contacts may induce endothelial cell apoptosis with consequent vascular regression. In concert with VEGF, it may facilitate endothelial cell migration and proliferation, thus serving as a permissive angiogenic signal. Involved in the regulation of lymphangiogenesis. The chain is Angiopoietin-2 (Angpt2) from Rattus norvegicus (Rat).